Consider the following 200-residue polypeptide: Imidazoleglycerol-phosphate dehydratase (200 aa).

Belongs to the imidazoleglycerol-phosphate dehydratase family.

It is found in the cytoplasm. It carries out the reaction D-erythro-1-(imidazol-4-yl)glycerol 3-phosphate = 3-(imidazol-4-yl)-2-oxopropyl phosphate + H2O. It functions in the pathway amino-acid biosynthesis; L-histidine biosynthesis; L-histidine from 5-phospho-alpha-D-ribose 1-diphosphate: step 6/9. In Chlorobium luteolum (strain DSM 273 / BCRC 81028 / 2530) (Pelodictyon luteolum), this protein is Imidazoleglycerol-phosphate dehydratase.